A 774-amino-acid polypeptide reads, in one-letter code: MEAEQRPAAGASEGATPGLEAVPPVAPPPATAASGPIPKSGPEPKRRHLGTLLQPTVNKFSLRVFGSHKAVEIEQERVKSAGAWIIHPYSDFRFYWDLIMLLLMVGNLIVLPVGITFFKEENSPPWIVFNVLSDTFFLLDLVLNFRTGIVVEEGAEILLAPRAIRTRYLRTWFLVDLISSIPVDYIFLVVELEPRLDAEVYKTARALRIVRFTKILSLLRLLRLSRLIRYIHQWEEIFHMTYDLASAVVRIFNLIGMMLLLCHWDGCLQFLVPMLQDFPPDCWVSINHMVNHSWGRQYSHALFKAMSHMLCIGYGQQAPVGMPDVWLTMLSMIVGATCYAMFIGHATALIQSLDSSRRQYQEKYKQVEQYMSFHKLPADTRQRIHEYYEHRYQGKMFDEESILGELSEPLREEIINFTCRGLVAHMPLFAHADPSFVTAVLTKLRFEVFQPGDLVVREGSVGRKMYFIQHGLLSVLARGARDTRLTDGSYFGEICLLTRGRRTASVRADTYCRLYSLSVDHFNAVLEEFPMMRRAFETVAMDRLLRIGKKNSILQRKRSEPSPGSSGGIMEQHLVQHDRDMARGVRGRAPSTGAQLSGKPVLWEPLVHAPLQAAAVTSNVAIALTHQRGPLPLSPDSPATLLARSAWRSAGSPASPLVPVRAGPWASTSRLPAPPARTLHASLSRAGRSQVSLLGPPPGGGGRRLGPRGRPLSASQPSLPQRATGDGSPGRKGSGSERLPPSGLLAKPPRTAQPPRPPVPEPATPRGLQLSANM.

A disordered region spans residues 1–48 (MEAEQRPAAGASEGATPGLEAVPPVAPPPATAASGPIPKSGPEPKRRH). Residues 1–97 (MEAEQRPAAG…PYSDFRFYWD (97 aa)) lie on the Cytoplasmic side of the membrane. The segment at 46 to 91 (RRHLGTLLQPTVNKFSLRVFGSHKAVEIEQERVKSAGAWIIHPYSD) is involved in subunit assembly. A helical membrane pass occupies residues 98–118 (LIMLLLMVGNLIVLPVGITFF). The Extracellular segment spans residues 119–124 (KEENSP). Residues 125-145 (PWIVFNVLSDTFFLLDLVLNF) traverse the membrane as a helical segment. The Cytoplasmic segment spans residues 146–171 (RTGIVVEEGAEILLAPRAIRTRYLRT). The helical transmembrane segment at 172-192 (WFLVDLISSIPVDYIFLVVEL) threads the bilayer. At 193–201 (EPRLDAEVY) the chain is on the extracellular side. The chain crosses the membrane as a helical; Voltage-sensor span at residues 202–222 (KTARALRIVRFTKILSLLRLL). At 223–253 (RLSRLIRYIHQWEEIFHMTYDLASAVVRIFN) the chain is on the cytoplasmic side. The helical transmembrane segment at 254-274 (LIGMMLLLCHWDGCLQFLVPM) threads the bilayer. The Extracellular portion of the chain corresponds to 275–297 (LQDFPPDCWVSINHMVNHSWGRQ). A glycan (N-linked (GlcNAc...) asparagine) is linked at asparagine 291. The pore-forming intramembrane region spans 298-319 (YSHALFKAMSHMLCIGYGQQAP). Over 320–329 (VGMPDVWLTM) the chain is Extracellular. The helical transmembrane segment at 330–350 (LSMIVGATCYAMFIGHATALI) threads the bilayer. Over 351-774 (QSLDSSRRQY…PRGLQLSANM (424 aa)) the chain is Cytoplasmic. The segment at 354–774 (DSSRRQYQEK…PRGLQLSANM (421 aa)) is interaction with KCTD3. The 3',5'-cyclic AMP site is built by glycine 492, glutamate 493, cysteine 495, arginine 502, threonine 503, arginine 543, and arginine 546. The residue at position 634 (serine 634) is a Phosphoserine. The disordered stretch occupies residues 682–774 (SLSRAGRSQV…PRGLQLSANM (93 aa)). Residues 751 to 763 (TAQPPRPPVPEPA) show a composition bias toward pro residues.

It belongs to the potassium channel HCN family. In terms of assembly, homotetramer. The potassium channel is composed of a homo- or heterotetrameric complex of pore-forming subunits. Interacts with HCN11. Interacts with KCTD3; this interaction increases cell surface expression and current density of this channel. Interacts with PEX5L. As to expression, detected in brain.

It is found in the cell membrane. The catalysed reaction is K(+)(in) = K(+)(out). It carries out the reaction Na(+)(in) = Na(+)(out). Its activity is regulated as follows. Unlike HCN2 and HCN4, HCN3 is insensitive to cyclic nucleotides, such as cAMP or cGMP. This lack of sensitivity of HCN3, despite harboring a functional cyclic nucleotide-binding domain (CNBD), may be explained by its shorter C-terminal sequence, which may alter the normal autoinhibition of the channel. Inhibited by Cs(1+) and ZD7288. Phosphatidylinositol-4,5-bisphosphate (PIP(2)) shifts HCN3 activation to more depolarized potentials and accelerated activation kinetics. Functionally, hyperpolarization-activated ion channel that are permeable to sodium and potassium ions, with an about 3:1 preference for potassium ions. Contributes to the native pacemaker currents in heart (If) and in neurons (Ih). In particular, plays a pivotal role in maintaining excitability and promoting rhythmic burst firing within hypothalamic nuclei. Exerts a significant influence on the configuration of the cardiac action potential waveform. Does not appear to play a prominent role in the processing of acute, neuropathic, or inflammatory pain. The protein is Potassium/sodium hyperpolarization-activated cyclic nucleotide-gated channel 3 (HCN3) of Homo sapiens (Human).